The chain runs to 210 residues: Thymidylate kinase (210 aa).

Position 9-16 (9-16 (GLEGAGKS)) interacts with ATP.

This sequence belongs to the thymidylate kinase family.

The catalysed reaction is dTMP + ATP = dTDP + ADP. Functionally, phosphorylation of dTMP to form dTDP in both de novo and salvage pathways of dTTP synthesis. This chain is Thymidylate kinase, found in Aliivibrio fischeri (strain ATCC 700601 / ES114) (Vibrio fischeri).